A 908-amino-acid chain; its full sequence is Protein translocase subunit SecA (908 aa).

Residues Gln-87, 105-109 (GEGKT), and Asp-512 each bind ATP. The segment at 860–908 (AESLVGSSDEHEAVTAQAPMIRDGEKVGRNDPCPCGSGRKYKQCHGKLS) is disordered. Zn(2+)-binding residues include Cys-892, Cys-894, Cys-903, and His-904. Residues 898 to 908 (RKYKQCHGKLS) are compositionally biased toward basic residues.

It belongs to the SecA family. Monomer and homodimer. Part of the essential Sec protein translocation apparatus which comprises SecA, SecYEG and auxiliary proteins SecDF-YajC and YidC. The cofactor is Zn(2+).

The protein resides in the cell inner membrane. It localises to the cytoplasm. It catalyses the reaction ATP + H2O + cellular proteinSide 1 = ADP + phosphate + cellular proteinSide 2.. In terms of biological role, part of the Sec protein translocase complex. Interacts with the SecYEG preprotein conducting channel. Has a central role in coupling the hydrolysis of ATP to the transfer of proteins into and across the cell membrane, serving both as a receptor for the preprotein-SecB complex and as an ATP-driven molecular motor driving the stepwise translocation of polypeptide chains across the membrane. In Shewanella baltica (strain OS155 / ATCC BAA-1091), this protein is Protein translocase subunit SecA.